A 230-amino-acid polypeptide reads, in one-letter code: Cysteine S-methyltransferase OspZ (230 aa).

Residues 49–52 (GITR) are interaction with host proteins TAB2, TAB3 and ZRANB3. S-adenosyl-L-methionine-binding residues include Ala92, Ser98, Arg107, Gln111, Tyr204, and Glu208.

The protein belongs to the NleE/OspZ family. As to quaternary structure, monomer.

The protein localises to the secreted. The protein resides in the host cytoplasm. Its subcellular location is the host nucleus. The catalysed reaction is L-cysteinyl-[protein] + S-adenosyl-L-methionine = S-methyl-L-cysteinyl-[protein] + S-adenosyl-L-homocysteine + H(+). Its function is as follows. Cysteine methyltransferase effector that inhibits host cell NF-kappa-B activation by preventing nuclear translocation of host protein RELA/p65. Acts by mediating cysteine methylation of host proteins TAB2 and TAB3: methylation of a conserved cysteine residue of the RanBP2-type zinc finger (NZF) of TAB2 and TAB3 disrupts zinc-binding, thereby inactivating the ubiquitin chain-binding activity of TAB2 and TAB3, leading to NF-kappa-B inactivation. Also mediates cysteine methylation of host protein ZRANB3, inactivating its ability to bind ubiquitin chains. The sequence is that of Cysteine S-methyltransferase OspZ from Shigella flexneri.